Reading from the N-terminus, the 220-residue chain is GILT-like protein CBG03282 (220 aa).

The N-terminal stretch at 1–22 (MTIIRTLFVYYSFLFILVLCSS) is a signal peptide. Asn-131 carries N-linked (GlcNAc...) asparagine glycosylation.

It belongs to the GILT family.

The protein localises to the secreted. The protein is GILT-like protein CBG03282 of Caenorhabditis briggsae.